The primary structure comprises 361 residues: 3-dehydroquinate synthase (361 aa).

Residues 104–108, 128–129, Lys-141, Lys-150, and 168–171 each bind NAD(+); these read GVIGD, TT, and FLRT. Glu-183, His-246, and His-263 together coordinate Zn(2+).

The protein belongs to the sugar phosphate cyclases superfamily. Dehydroquinate synthase family. Co(2+) is required as a cofactor. The cofactor is Zn(2+). NAD(+) serves as cofactor.

The protein resides in the cytoplasm. It catalyses the reaction 7-phospho-2-dehydro-3-deoxy-D-arabino-heptonate = 3-dehydroquinate + phosphate. It participates in metabolic intermediate biosynthesis; chorismate biosynthesis; chorismate from D-erythrose 4-phosphate and phosphoenolpyruvate: step 2/7. Its function is as follows. Catalyzes the conversion of 3-deoxy-D-arabino-heptulosonate 7-phosphate (DAHP) to dehydroquinate (DHQ). The protein is 3-dehydroquinate synthase of Opitutus terrae (strain DSM 11246 / JCM 15787 / PB90-1).